The chain runs to 425 residues: MYLGRVHCSFEVPGLLSGRVGHMSMAVRSVRLACGPRGALLLLLLVLLGVLVVLHKVTQSPLLNQNKILQDHLRGQHERYIQSTRTILLWTEFFGDSRWKLSWDTLGPQELRDELHCPVYQCEISNQNAFLPAVELYDAIVFHAAEMFPLLRPVPSQRSPHQVYVFALMEPPGETKHRLDDEQGFYNLTMTYRIDSDVFWPYGQLLDITADAVVAPSVKPPWRKPPVAFNDSLVWDLWSGKTKTAAWFVSHCETLSKREVLANRLQEFFEVDIYGNCGTLSCTRGDPHCAEMLDTDYFFYLAFENSLCDDYVTEKLFDALERTVIPVVFGGADYSRILPPHSYVDANRFMSVEGLAQYMKLVVADPDLYVSYFWWRSHYRLTYSSPFCDLCARLHDPSFGHKTQFYHDIQSWWFNSCRLQSRIRL.

Topologically, residues 1–37 are cytoplasmic; the sequence is MYLGRVHCSFEVPGLLSGRVGHMSMAVRSVRLACGPR. Residues 38–58 traverse the membrane as a helical; Signal-anchor for type II membrane protein segment; the sequence is GALLLLLLVLLGVLVVLHKVT. At 59–425 the chain is on the lumenal side; sequence QSPLLNQNKI…SCRLQSRIRL (367 aa). 2 N-linked (GlcNAc...) asparagine glycosylation sites follow: asparagine 187 and asparagine 230.

It belongs to the glycosyltransferase 10 family.

The protein resides in the golgi apparatus. It localises to the golgi stack membrane. It participates in protein modification; protein glycosylation. This chain is Alpha-(1,3)-fucosyltransferase C (FucTC), found in Drosophila melanogaster (Fruit fly).